The sequence spans 420 residues: Probable secreted beta-glucosidase SUN4 (420 aa).

Positions 1–24 (MKLSATTLTAASLIGYSTIVSALP) are cleaved as a signal peptide. Residues 89–145 (TKSSSKVASSSESTEQIATTSSSAQTTLTSSETSTSESSVPISTSGSASTSSAASSA) are disordered. Residue asparagine 395 is glycosylated (N-linked (GlcNAc...) asparagine).

This sequence belongs to the SUN family. In terms of processing, glycosylated.

Its subcellular location is the secreted. It is found in the cell wall. Involved in the remodeling of the cell wall during the various phases of yeast culture development and under various environmental conditions and plays a role in septation. This Saccharomyces cerevisiae (strain ATCC 204508 / S288c) (Baker's yeast) protein is Probable secreted beta-glucosidase SUN4 (SUN4).